The sequence spans 200 residues: GTP cyclohydrolase-2 (200 aa).

52-56 (RIHSE) is a GTP binding site. Cys-57, Cys-68, and Cys-70 together coordinate Zn(2+). GTP-binding positions include Gln-73, 94 to 96 (EGR), and Thr-116. The Proton acceptor role is filled by Asp-128. Arg-130 serves as the catalytic Nucleophile. Thr-151 and Lys-156 together coordinate GTP.

This sequence belongs to the GTP cyclohydrolase II family. The cofactor is Zn(2+).

The catalysed reaction is GTP + 4 H2O = 2,5-diamino-6-hydroxy-4-(5-phosphoribosylamino)-pyrimidine + formate + 2 phosphate + 3 H(+). Its pathway is cofactor biosynthesis; riboflavin biosynthesis; 5-amino-6-(D-ribitylamino)uracil from GTP: step 1/4. Its function is as follows. Catalyzes the conversion of GTP to 2,5-diamino-6-ribosylamino-4(3H)-pyrimidinone 5'-phosphate (DARP), formate and pyrophosphate. The protein is GTP cyclohydrolase-2 of Psychromonas ingrahamii (strain DSM 17664 / CCUG 51855 / 37).